We begin with the raw amino-acid sequence, 930 residues long: APC membrane recruitment protein 1 (930 aa).

Disordered stretches follow at residues 1–33 (MEIA…PPSV), 55–76 (FFGG…TKSQ), 104–133 (CSEP…LFSS), 161–193 (TVPG…NQTT), 222–245 (EMDK…RQEG), and 366–454 (EVCY…PRDS). The segment covering 222–242 (EMDKRRRAEEEGIGEDEKTGR) has biased composition (basic and acidic residues). Composition is skewed to polar residues over residues 377–399 (DSPS…SSPM) and 413–424 (SPQSDRQESVPN). A compositionally biased stretch (basic and acidic residues) spans 439-452 (EESRERPHQERLPR).

Belongs to the Amer family.

It localises to the cytoplasm. It is found in the cell membrane. The protein resides in the nucleus. Functionally, regulator of the canonical Wnt signaling pathway. Acts by specifically binding phosphatidylinositol 4,5-bisphosphate (PtdIns(4,5)P2), translocating to the cell membrane and interacting with key regulators of the canonical Wnt signaling pathway, such as components of the beta-catenin destruction complex. Acts both as a positive and negative regulator of the Wnt signaling pathway, depending on the context. This is APC membrane recruitment protein 1 (amer1) from Danio rerio (Zebrafish).